A 274-amino-acid chain; its full sequence is 2,3,4,5-tetrahydropyridine-2,6-dicarboxylate N-succinyltransferase (274 aa).

Arginine 106 and aspartate 143 together coordinate substrate.

Belongs to the transferase hexapeptide repeat family. As to quaternary structure, homotrimer.

Its subcellular location is the cytoplasm. It carries out the reaction (S)-2,3,4,5-tetrahydrodipicolinate + succinyl-CoA + H2O = (S)-2-succinylamino-6-oxoheptanedioate + CoA. It participates in amino-acid biosynthesis; L-lysine biosynthesis via DAP pathway; LL-2,6-diaminopimelate from (S)-tetrahydrodipicolinate (succinylase route): step 1/3. In Cupriavidus metallidurans (strain ATCC 43123 / DSM 2839 / NBRC 102507 / CH34) (Ralstonia metallidurans), this protein is 2,3,4,5-tetrahydropyridine-2,6-dicarboxylate N-succinyltransferase.